Reading from the N-terminus, the 139-residue chain is 6,7-dimethyl-8-ribityllumazine synthase (139 aa).

Residues phenylalanine 11, 42–44, and 66–68 contribute to the 5-amino-6-(D-ribitylamino)uracil site; these read ALE and VVI. 71-72 contributes to the (2S)-2-hydroxy-3-oxobutyl phosphate binding site; it reads ET. Residue histidine 74 is the Proton donor of the active site. Asparagine 98 lines the 5-amino-6-(D-ribitylamino)uracil pocket. Arginine 112 lines the (2S)-2-hydroxy-3-oxobutyl phosphate pocket.

This sequence belongs to the DMRL synthase family.

The enzyme catalyses (2S)-2-hydroxy-3-oxobutyl phosphate + 5-amino-6-(D-ribitylamino)uracil = 6,7-dimethyl-8-(1-D-ribityl)lumazine + phosphate + 2 H2O + H(+). It functions in the pathway cofactor biosynthesis; riboflavin biosynthesis; riboflavin from 2-hydroxy-3-oxobutyl phosphate and 5-amino-6-(D-ribitylamino)uracil: step 1/2. Functionally, catalyzes the formation of 6,7-dimethyl-8-ribityllumazine by condensation of 5-amino-6-(D-ribitylamino)uracil with 3,4-dihydroxy-2-butanone 4-phosphate. This is the penultimate step in the biosynthesis of riboflavin. This Novosphingobium aromaticivorans (strain ATCC 700278 / DSM 12444 / CCUG 56034 / CIP 105152 / NBRC 16084 / F199) protein is 6,7-dimethyl-8-ribityllumazine synthase.